We begin with the raw amino-acid sequence, 265 residues long: NAD kinase 1 (265 aa).

Residue Asp45 is the Proton acceptor of the active site. NAD(+) is bound by residues 45-46, 122-123, Arg148, Asp150, and Ala185; these read DG and NE.

This sequence belongs to the NAD kinase family. The cofactor is a divalent metal cation.

It localises to the cytoplasm. It carries out the reaction NAD(+) + ATP = ADP + NADP(+) + H(+). Involved in the regulation of the intracellular balance of NAD and NADP, and is a key enzyme in the biosynthesis of NADP. Catalyzes specifically the phosphorylation on 2'-hydroxyl of the adenosine moiety of NAD to yield NADP. This chain is NAD kinase 1, found in Bacillus anthracis.